The sequence spans 26 residues: Hemocyanin subunit 5 (26 aa).

The protein belongs to the tyrosinase family. Hemocyanin subfamily. As to expression, hemolymph.

Its subcellular location is the secreted. It is found in the extracellular space. Hemocyanins are copper-containing oxygen carriers occurring freely dissolved in the hemolymph of many mollusks and arthropods. The chain is Hemocyanin subunit 5 from Maja squinado (Mediterranean spider crab).